Reading from the N-terminus, the 104-residue chain is UPF0145 protein VIBHAR_02090 (104 aa).

It belongs to the UPF0145 family.

The protein is UPF0145 protein VIBHAR_02090 of Vibrio campbellii (strain ATCC BAA-1116).